The following is a 340-amino-acid chain: Biotin synthase (340 aa).

The Radical SAM core domain occupies 45–272 (NAVQVSTLLS…ASYVRLSAGR (228 aa)). 3 residues coordinate [4Fe-4S] cluster: Cys60, Cys64, and Cys67. Positions 104, 135, 195, and 267 each coordinate [2Fe-2S] cluster.

Belongs to the radical SAM superfamily. Biotin synthase family. Homodimer. The cofactor is [4Fe-4S] cluster. [2Fe-2S] cluster is required as a cofactor.

It catalyses the reaction (4R,5S)-dethiobiotin + (sulfur carrier)-SH + 2 reduced [2Fe-2S]-[ferredoxin] + 2 S-adenosyl-L-methionine = (sulfur carrier)-H + biotin + 2 5'-deoxyadenosine + 2 L-methionine + 2 oxidized [2Fe-2S]-[ferredoxin]. It functions in the pathway cofactor biosynthesis; biotin biosynthesis; biotin from 7,8-diaminononanoate: step 2/2. Its function is as follows. Catalyzes the conversion of dethiobiotin (DTB) to biotin by the insertion of a sulfur atom into dethiobiotin via a radical-based mechanism. In Thioalkalivibrio sulfidiphilus (strain HL-EbGR7), this protein is Biotin synthase.